The primary structure comprises 291 residues: tRNA dimethylallyltransferase (291 aa).

Position 9–16 (9–16 (GPTASGKT)) interacts with ATP. 11-16 (TASGKT) is a substrate binding site. Residues 34–37 (DSLQ) are interaction with substrate tRNA.

This sequence belongs to the IPP transferase family. Monomer. It depends on Mg(2+) as a cofactor.

It carries out the reaction adenosine(37) in tRNA + dimethylallyl diphosphate = N(6)-dimethylallyladenosine(37) in tRNA + diphosphate. Its function is as follows. Catalyzes the transfer of a dimethylallyl group onto the adenine at position 37 in tRNAs that read codons beginning with uridine, leading to the formation of N6-(dimethylallyl)adenosine (i(6)A). The sequence is that of tRNA dimethylallyltransferase from Onion yellows phytoplasma (strain OY-M).